Reading from the N-terminus, the 919-residue chain is Translocase of chloroplast 101, chloroplastic (919 aa).

Disordered stretches follow at residues 20-47 (SASRSLSEEVGVDPALVSEGAPEGVIEG) and 64-211 (VDDE…NETR). Residues 73–88 (SENKAVVETEKVESKP) are compositionally biased toward basic and acidic residues. The span at 96 to 128 (FAEEDGDSDADAEDEDDEDDEDDDEDDDDEDDK) shows a compositional bias: acidic residues. Polar residues predominate over residues 182 to 207 (QRPNGAPSTQLTATTEENANSDTAEG). Residues 284-513 (DFACTILVLG…KLQETATPGR (230 aa)) enclose the AIG1-type G domain. A G1 region spans residues 293 to 300 (GKTGVGKS). GTP is bound at residue 296–301 (GVGKSA). Residue Ser300 coordinates Mg(2+). Residues 319–323 (PSTNK) form a G2 region. The interval 340 to 343 (DTPG) is G3. The segment at 412-415 (THAS) is G4. GTP-binding positions include His413 and 461 to 462 (EN). Positions 461 to 463 (ENH) are G5. Disordered stretches follow at residues 540–585 (LPDE…LTKE) and 611–650 (RRRKEMKKRQAQMSKEELAQPDEADDEAGQPAAVPVPMPD). The span at 543-567 (EQLDESDESDDDEEEEDSEADDYDE) shows a compositional bias: acidic residues. Over residues 574-585 (LSKEELEELTKE) the composition is skewed to basic and acidic residues. Over residues 629 to 638 (AQPDEADDEA) the composition is skewed to acidic residues. Residues 641–650 (PAAVPVPMPD) show a composition bias toward low complexity. A helical transmembrane segment spans residues 893–914 (MVLIGIVPILRSLINCRFGFGG).

This sequence belongs to the TRAFAC class TrmE-Era-EngA-EngB-Septin-like GTPase superfamily. AIG1/Toc34/Toc159-like paraseptin GTPase family. TOC159 subfamily. In terms of assembly, part of the TOC core complex. Mg(2+) is required as a cofactor.

Its subcellular location is the plastid. The protein resides in the chloroplast outer membrane. Its function is as follows. GTPase involved in protein precursor import into chloroplasts. Seems to recognize chloroplast-destined precursor proteins and regulate their presentation to the translocation channel through GTP hydrolysis. Probably specialized in the import of nuclear encoded non-photosynthetic preproteins from the cytoplasm to the chloroplast. The polypeptide is Translocase of chloroplast 101, chloroplastic (Physcomitrium patens (Spreading-leaved earth moss)).